Here is a 125-residue protein sequence, read N- to C-terminus: Calcitonin receptor-stimulating peptide 1 (125 aa).

A signal peptide spans 1 to 25 (MGFWKFPPFLVLSILVLYQAGMFHA). The propeptide occupies 26-77 (APFRSVFDGRFDPATLDEEESRLLLAAMVNDYEQMRARESEKAQKTEGSRIQ). A disulfide bond links Cys-81 and Cys-86.

Belongs to the calcitonin family.

The protein localises to the secreted. In terms of biological role, stimulates cAMP production in porcine kidney cell line LLC-PK1 via the calcitonin receptor (CT) but not via the CT-like (CL) receptor. This is Calcitonin receptor-stimulating peptide 1 (CRSP1) from Bos taurus (Bovine).